Consider the following 535-residue polypeptide: Probable C4-dicarboxylate sensor kinase (535 aa).

Topologically, residues 1–11 are cytoplasmic; it reads MNKKKLSIRWK. The helical transmembrane segment at 12–32 threads the bilayer; sequence ITILSYILVIFSFLIGGIVLI. The Extracellular portion of the chain corresponds to 33 to 172; sequence GNIQHTEERE…IADILLHLKR (140 aa). A helical membrane pass occupies residues 173-193; it reads DIAFIVVLTLGFGLAGSFLLA. Residues 194–535 lie on the Cytoplasmic side of the membrane; it reads RHIKKQMFQL…MKGEEAQHGS (342 aa). The 64-residue stretch at 213 to 276 folds into the PAS domain; the sequence is EERTATFHSM…PEIVERNKAV (64 aa). Residues 333 to 528 enclose the Histidine kinase domain; the sequence is VQNHEHMNKL…SFSIVFPMKG (196 aa). His336 carries the post-translational modification Phosphohistidine; by autocatalysis.

It is found in the cell membrane. The enzyme catalyses ATP + protein L-histidine = ADP + protein N-phospho-L-histidine.. Functionally, member of the two-component regulatory system DctS/DctR. Probably activates DctR by phosphorylation. Essential for expression of dctP. The protein is Probable C4-dicarboxylate sensor kinase (dctS) of Bacillus subtilis (strain 168).